Here is a 454-residue protein sequence, read N- to C-terminus: Probable ECA polymerase (454 aa).

Helical transmembrane passes span 3–23, 39–59, 61–81, 119–139, 154–174, 180–200, 201–221, 222–242, 340–360, 377–397, and 409–429; these read LGQFGGLFCIYLIAVIFILTL, FSMLYLLTFYFGFPLTCMLVF, FGVAVVPVEYLLYAMLSATAF, LALVAVGTVGIFFMQNGFLLF, GVALKRFFYFFIPAMLVVYFL, AWFFFLASTVAFGILTYVIVG, GTRANIIIAFSLFLFIGIVRG, WITLWMLAAAGVFGIVGMFWL, LVVMGGVLFIPLGAIVVGLII, YKAAILQSFCFGAVFNIIVLA, and VFFCVIFGACLVLAKLLYWLF.

This sequence belongs to the WzyE family. In terms of assembly, probably part of a complex composed of WzxE, WzyE and WzzE.

The protein localises to the cell inner membrane. It participates in bacterial outer membrane biogenesis; enterobacterial common antigen biosynthesis. Functionally, probably involved in the polymerization of enterobacterial common antigen (ECA) trisaccharide repeat units. This is Probable ECA polymerase from Yersinia pseudotuberculosis serotype O:1b (strain IP 31758).